A 346-amino-acid polypeptide reads, in one-letter code: Phosphate acyltransferase (346 aa).

The protein belongs to the PlsX family. In terms of assembly, homodimer. Probably interacts with PlsY.

Its subcellular location is the cytoplasm. It catalyses the reaction a fatty acyl-[ACP] + phosphate = an acyl phosphate + holo-[ACP]. Its pathway is lipid metabolism; phospholipid metabolism. Functionally, catalyzes the reversible formation of acyl-phosphate (acyl-PO(4)) from acyl-[acyl-carrier-protein] (acyl-ACP). This enzyme utilizes acyl-ACP as fatty acyl donor, but not acyl-CoA. The protein is Phosphate acyltransferase of Brucella ovis (strain ATCC 25840 / 63/290 / NCTC 10512).